The primary structure comprises 57 residues: Phospholipase A2 superbin b (57 aa).

Residues Tyr-28, Gly-30, and Gly-32 each coordinate Ca(2+). An intrachain disulfide couples Cys-29 to Cys-45. Residue His-48 is part of the active site. Position 49 (Asp-49) interacts with Ca(2+).

The cofactor is Ca(2+). Expressed by the venom gland.

It localises to the secreted. It catalyses the reaction a 1,2-diacyl-sn-glycero-3-phosphocholine + H2O = a 1-acyl-sn-glycero-3-phosphocholine + a fatty acid + H(+). Its function is as follows. Snake venom phospholipase A2 (PLA2) that inhibits collagen-induced platelet aggregation. In terms of inhibition of platelet aggregation, superbin b is more potent as superbin c, and d. PLA2 catalyzes the calcium-dependent hydrolysis of the 2-acyl groups in 3-sn-phosphoglycerides. The chain is Phospholipase A2 superbin b from Austrelaps superbus (Lowland copperhead snake).